The chain runs to 361 residues: RLA class I histocompatibility antigen, alpha chain 19-1 (361 aa).

The signal sequence occupies residues 1 to 24 (MGSIPPRTLLLLLAGALTLKDTQA). Positions 25-114 (GSHSMRYFYT…ALRYYNQSAA (90 aa)) are alpha-1. The Extracellular segment spans residues 25–308 (GSHSMRYFYT…EPPAQPTALI (284 aa)). Residue Asn-110 is glycosylated (N-linked (GlcNAc...) asparagine). Residues 115–206 (GSHTFQTMFG…EMGKETLQRA (92 aa)) are alpha-2. 2 cysteine pairs are disulfide-bonded: Cys-125-Cys-188 and Cys-227-Cys-283. Residues 207 to 298 (DPPKAHVTHH…GLPEPLTLTW (92 aa)) are alpha-3. Residues 209 to 297 (PKAHVTHHPA…EGLPEPLTLT (89 aa)) form the Ig-like C1-type domain. Residues 299–308 (EPPAQPTALI) are connecting peptide. A helical membrane pass occupies residues 309–329 (VGIVAGVLGVLLILGAVVAVV). Residues 330 to 361 (RRKKHSSDGKGGRYTPAAGGHRDQGSDDSLMP) lie on the Cytoplasmic side of the membrane. Residues 335–361 (SSDGKGGRYTPAAGGHRDQGSDDSLMP) form a disordered region. Phosphoserine occurs at positions 355 and 358.

The protein belongs to the MHC class I family. As to quaternary structure, heterodimer of an alpha chain and a beta chain (beta-2-microglobulin).

The protein resides in the membrane. In terms of biological role, involved in the presentation of foreign antigens to the immune system. The sequence is that of RLA class I histocompatibility antigen, alpha chain 19-1 from Oryctolagus cuniculus (Rabbit).